The chain runs to 249 residues: Zinc import ATP-binding protein ZnuC (249 aa).

Residues 1 to 219 (MRLVSLRNAT…PEYQALFGSG (219 aa)) form the ABC transporter domain. 36 to 43 (GPNGSGKS) is an ATP binding site.

The protein belongs to the ABC transporter superfamily. Zinc importer (TC 3.A.1.15.5) family. The complex is composed of two ATP-binding proteins (ZnuC), two transmembrane proteins (ZnuB) and a solute-binding protein (ZnuA).

It localises to the cell inner membrane. The catalysed reaction is Zn(2+)(out) + ATP(in) + H2O(in) = Zn(2+)(in) + ADP(in) + phosphate(in) + H(+)(in). In terms of biological role, part of the ABC transporter complex ZnuABC involved in zinc import. Responsible for energy coupling to the transport system. The polypeptide is Zinc import ATP-binding protein ZnuC (Ruegeria sp. (strain TM1040) (Silicibacter sp.)).